Reading from the N-terminus, the 444-residue chain is Ribosome biogenesis protein WDR12 homolog (444 aa).

Residues valine 7 to proline 87 form a ubiquitin-like (UBL) domain region. Residues proline 91–serine 123 form a disordered region. WD repeat units lie at residues serine 105–valine 148, alanine 150–alanine 191, and glycine 203–alanine 242. The tract at residues glycine 243 to glycine 264 is disordered. 4 WD repeats span residues glycine 272 to threonine 310, asparagine 312 to alanine 352, alanine 360 to methionine 400, and histidine 403 to serine 444.

It belongs to the WD repeat WDR12/YTM1 family.

Its subcellular location is the nucleus. It is found in the nucleolus. It localises to the nucleoplasm. Its function is as follows. Required for maturation of ribosomal RNAs and formation of the large ribosomal subunit. The protein is Ribosome biogenesis protein WDR12 homolog of Chlamydomonas reinhardtii (Chlamydomonas smithii).